The primary structure comprises 156 residues: Small ribosomal subunit protein uS7 (156 aa).

The protein belongs to the universal ribosomal protein uS7 family. As to quaternary structure, part of the 30S ribosomal subunit. Contacts proteins S9 and S11.

Its function is as follows. One of the primary rRNA binding proteins, it binds directly to 16S rRNA where it nucleates assembly of the head domain of the 30S subunit. Is located at the subunit interface close to the decoding center, probably blocks exit of the E-site tRNA. In Cupriavidus metallidurans (strain ATCC 43123 / DSM 2839 / NBRC 102507 / CH34) (Ralstonia metallidurans), this protein is Small ribosomal subunit protein uS7.